The primary structure comprises 41 residues: AVVFDPPPALWAEADXQQEPLRNLTQTVGQYLPTLSGXLAE.

Residue Asn-23 is glycosylated (N-linked (GlcNAc...) asparagine).

In terms of assembly, interacts with CRISP3. Glycosylated. In terms of tissue distribution, plasma.

The protein localises to the secreted. The polypeptide is Alpha-1B-glycoprotein (A1BG) (Equus caballus (Horse)).